Here is a 212-residue protein sequence, read N- to C-terminus: Uracil phosphoribosyltransferase (212 aa).

5-phospho-alpha-D-ribose 1-diphosphate is bound by residues arginine 78, arginine 103, and 130–138 (DPMLATGGS). Residues isoleucine 193 and 198-200 (GDA) contribute to the uracil site. Position 199 (aspartate 199) interacts with 5-phospho-alpha-D-ribose 1-diphosphate.

It belongs to the UPRTase family. The cofactor is Mg(2+).

The enzyme catalyses UMP + diphosphate = 5-phospho-alpha-D-ribose 1-diphosphate + uracil. It functions in the pathway pyrimidine metabolism; UMP biosynthesis via salvage pathway; UMP from uracil: step 1/1. With respect to regulation, allosterically activated by GTP. In terms of biological role, catalyzes the conversion of uracil and 5-phospho-alpha-D-ribose 1-diphosphate (PRPP) to UMP and diphosphate. The chain is Uracil phosphoribosyltransferase from Pseudomonas putida (strain ATCC 700007 / DSM 6899 / JCM 31910 / BCRC 17059 / LMG 24140 / F1).